A 35-amino-acid polypeptide reads, in one-letter code: Natriuretic peptide TNPa (35 aa).

Cysteines 9 and 25 form a disulfide.

As to expression, expressed by the venom gland.

Its subcellular location is the secreted. Its function is as follows. Snake venom natriuretic peptide that exhibits vasoactive and probable hypotensive activity. Is only weakly active on natriuretic peptide receptor-C (NPR3). Stimulates cGMP production through the natriuretic peptide receptor 1 (NPR1) with moderate potencies for the rat NPR1 (EC(50)=2020 nM), and very weak potencies over human NPR1 (15% activation at 10 uM). In vivo, does not impact systolic and diastolic blood pressure, as well as heart rate, when intravenously injected in conscious rabbits. Does not affect the bradycardia due to cardiac afferent stimulation (Bezold-Jarisch reflex). This is Natriuretic peptide TNPa from Oxyuranus microlepidotus (Inland taipan).